The following is a 239-amino-acid chain: Probable transcriptional regulatory protein Aave_3203 (239 aa).

The disordered stretch occupies residues 1 to 20 (MAGHSKWANIQHRKGRQDEK).

This sequence belongs to the TACO1 family.

It is found in the cytoplasm. This is Probable transcriptional regulatory protein Aave_3203 from Paracidovorax citrulli (strain AAC00-1) (Acidovorax citrulli).